The following is a 73-amino-acid chain: UPF0154 protein PEPE_0872 (73 aa).

The helical transmembrane segment at 5-25 (IWIMIVIIALLVGAVGGFFFA) threads the bilayer.

The protein belongs to the UPF0154 family.

The protein localises to the cell membrane. This Pediococcus pentosaceus (strain ATCC 25745 / CCUG 21536 / LMG 10740 / 183-1w) protein is UPF0154 protein PEPE_0872.